The primary structure comprises 212 residues: Protein-L-isoaspartate O-methyltransferase (212 aa).

The active site involves Ser60.

Belongs to the methyltransferase superfamily. L-isoaspartyl/D-aspartyl protein methyltransferase family.

It is found in the cytoplasm. The enzyme catalyses [protein]-L-isoaspartate + S-adenosyl-L-methionine = [protein]-L-isoaspartate alpha-methyl ester + S-adenosyl-L-homocysteine. Functionally, catalyzes the methyl esterification of L-isoaspartyl residues in peptides and proteins that result from spontaneous decomposition of normal L-aspartyl and L-asparaginyl residues. It plays a role in the repair and/or degradation of damaged proteins. This chain is Protein-L-isoaspartate O-methyltransferase, found in Methylorubrum populi (strain ATCC BAA-705 / NCIMB 13946 / BJ001) (Methylobacterium populi).